The following is a 341-amino-acid chain: Phospholipid phosphatase homolog 1.2 homolog (341 aa).

3 helical membrane passes run 30–50 (LFIF…LLGV), 71–91 (ITAV…VLFV), and 122–142 (LLTY…LNIV). N162 carries N-linked (GlcNAc...) asparagine glycosylation. Transmembrane regions (helical) follow at residues 223–243 (RIVV…ISFS) and 257–277 (VGIF…TDLF). 2 disordered regions span residues 284-308 (SETQ…ERHR) and 322-341 (FEAT…PQSA). The segment covering 299 to 308 (RNSEDEERHR) has biased composition (basic and acidic residues).

Belongs to the PA-phosphatase related phosphoesterase family.

The protein localises to the membrane. The protein is Phospholipid phosphatase homolog 1.2 homolog of Caenorhabditis elegans.